Reading from the N-terminus, the 347-residue chain is Core-capsid bridging protein (347 aa).

The interval 290-320 is disordered; it reads GYRGTTFQRRATAPSRRRGPSRRRRRRKATL. Residues 304–318 show a composition bias toward basic residues; sequence SRRRGPSRRRRRRKA.

Belongs to the adenoviridae core-capsid bridging protein family. Monomer. Homodimer. Exists in equilibrium between monomers and dimers in solution. Interacts with the histone-like nucleoprotein; this interactions bridge the virus core to the capsid. Interacts with core protein X; this interactions bridge the virus core to the capsid. Interacts with the endosome lysis protein VI; this interactions bridge the virus core to the capsid. Interacts with the peripentonal hexons. Interacts with host NPM1; this interaction might play a role in virus assembly.

The protein localises to the virion. It is found in the host nucleus. It localises to the host nucleolus. Its function is as follows. Associates loosely with the viral DNA to form an outer shell around the nucleoprotein-DNA complex and links it with the capsid by binding the endosome lysis protein. Dissociates from the viral genome during entry. Might be involved in nuclear capsid assembly of the viral particles through its association with NPM1/nucleophosmin. The protein is Core-capsid bridging protein of Homo sapiens (Human).